A 607-amino-acid chain; its full sequence is Autophagy-related protein 16-1 (607 aa).

Residues 13–43 (WKRHISEQLRRRDRLQRQAFEEIILQYNKLL) are interaction with ATG5. Positions 79–230 (DSQLQEMAQL…QKELAEAAKE (152 aa)) form a coiled coil. Phosphoserine is present on S139. Residues 207-230 (AENEKDSRRRQARLQKELAEAAKE) form a WIPI2-binding region. Residues 230–242 (EPLPVEQDDDIEV) are RB1CC1-binding. Residues S269 and S287 each carry the phosphoserine modification. The short motif at 296–299 (DNVD) is the Caspase cleavage element. WD repeat units lie at residues 320–359 (AHDG…CEFK), 364–403 (GSNA…LRHT), 406–445 (GHSG…CIKT), 447–484 (FAGS…IVRE), 486–525 (ELLG…IKQT), 532–573 (KCGS…KVLS), and 575–607 (QHSS…WAQY).

The protein belongs to the WD repeat ATG16 family. Homodimer. Homooligomer. Heterooligomer with ATG16L2. Interacts with WIPI1. Interacts with WIPI2. Interacts with RB1CC1; the interaction is required for ULK1 complex-dependent autophagy. Interacts with ATG5. Part of the minor complex composed of 4 sets of ATG12-ATG5 and ATG16L1 (400 kDa); this complex interacts with ATG3 leading to disruption of ATG7 interaction and promotion of ATG8-like proteins lipidation. Part of the major complex composed of 8 sets of ATG12-ATG5 and ATG16L1 (800 kDa). Interacts with RAB33B (GTP- and GDP-bound forms); the complex consists of a tetramer where two RAB33B molecules bind independently one molecule of the ATG16L1 homodimer; the interaction promotes ATG12-ATG5-ATG16L1 complex recruitment to phagophores. Interacts (via WD repeats) with TMEM59; the interaction mediates unconventional autophagic activity of TMEM59. Interacts with TLR2. Interacts (via WD repeats) with MEFV. Interacts with PPP1CA; the interaction dephosphorylates ATG16L1 causing dissociation of ATG12-ATG5-ATG16L1 complex. Interacts (via N-terminal) with CLTC. Interacts with NOD1. Interacts with NOD2. Interacts with TUFM. Interacts with TRIM16. Interacts (via WD repeats) with SPATA33. Interacts with IRGM. In terms of processing, proteolytic cleavage by activated CASP3 leads to degradation and may regulate autophagy upon cellular stress and apoptotic stimuli. Post-translationally, phosphorylation at Ser-139 promotes association with the ATG12-ATG5 conjugate to form the ATG12-ATG5-ATG16L1 complex.

Its subcellular location is the cytoplasm. It localises to the preautophagosomal structure membrane. It is found in the endosome membrane. The protein resides in the lysosome membrane. In terms of biological role, plays an essential role in both canonical and non-canonical autophagy: interacts with ATG12-ATG5 to mediate the lipidation to ATG8 family proteins (MAP1LC3A, MAP1LC3B, MAP1LC3C, GABARAPL1, GABARAPL2 and GABARAP). Acts as a molecular hub, coordinating autophagy pathways via distinct domains that support either canonical or non-canonical signaling. During canonical autophagy, interacts with ATG12-ATG5 to mediate the conjugation of phosphatidylethanolamine (PE) to ATG8 proteins, to produce a membrane-bound activated form of ATG8. Thereby, controls the elongation of the nascent autophagosomal membrane. As part of the ATG8 conjugation system with ATG5 and ATG12, required for recruitment of LRRK2 to stressed lysosomes and induction of LRRK2 kinase activity in response to lysosomal stress. Also involved in non-canonical autophagy, a parallel pathway involving conjugation of ATG8 proteins to single membranes at endolysosomal compartments, probably by catalyzing conjugation of phosphatidylserine (PS) to ATG8. Non-canonical autophagy plays a key role in epithelial cells to limit lethal infection by influenza A (IAV) virus. Regulates mitochondrial antiviral signaling (MAVS)-dependent type I interferon (IFN-I) production. Negatively regulates NOD1- and NOD2-driven inflammatory cytokine response. Instead, promotes an autophagy-dependent antibacterial pathway together with NOD1 or NOD2. Plays a role in regulating morphology and function of Paneth cell. This Pongo abelii (Sumatran orangutan) protein is Autophagy-related protein 16-1.